Here is a 382-residue protein sequence, read N- to C-terminus: Beta-1,4-galactosyltransferase 6 (382 aa).

Residues 1–15 (MSALKRMMRVSNRSL) lie on the Cytoplasmic side of the membrane. A helical; Signal-anchor for type II membrane protein membrane pass occupies residues 16-35 (IAFIFFFSLSTSCLYFIYVA). At 36 to 382 (PGIANTYLFM…MPELAPIEDY (347 aa)) the chain is on the lumenal side. N-linked (GlcNAc...) asparagine glycosylation is found at Asn71, Asn75, Asn83, Asn84, Asn99, and Asn122. Cysteines 108 and 152 form a disulfide. Residues 163-167 (PFRNR), 202-204 (FNR), 229-230 (VD), Tyr258, and Trp290 contribute to the UDP-alpha-D-galactose site. A disulfide bridge connects residues Cys223 and Cys242. Asp230 contributes to the Mn(2+) binding site. 292 to 295 (GEDD) contacts N-acetyl-D-glucosamine. N-linked (GlcNAc...) asparagine glycosylation occurs at Asn307. His323 contacts Mn(2+). A UDP-alpha-D-galactose-binding site is contributed by 323 to 324 (HH). Arg334 serves as a coordination point for N-acetyl-D-glucosamine. A glycan (N-linked (GlcNAc...) asparagine) is linked at Asn367.

The protein belongs to the glycosyltransferase 7 family. It depends on Mn(2+) as a cofactor. Mg(2+) serves as cofactor. Ca(2+) is required as a cofactor. In terms of tissue distribution, brain and kidney.

The protein resides in the golgi apparatus. The protein localises to the golgi stack membrane. It carries out the reaction a beta-D-glucosyl-(1&lt;-&gt;1')-N-acylsphing-4-enine + UDP-alpha-D-galactose = a beta-D-Gal-(1-&gt;4)-beta-D-Glc-(1&lt;-&gt;1)-Cer(d18:1(4E)) + UDP + H(+). The protein operates within protein modification; protein glycosylation. It participates in sphingolipid metabolism. With respect to regulation, inhibited by EDTA. In terms of biological role, catalyzes the synthesis of lactosylceramide (LacCer) via the transfer of galactose from UDP-galactose to glucosylceramide (GlcCer). LacCer is the starting point in the biosynthesis of all gangliosides (membrane-bound glycosphingolipids) which play pivotal roles in the CNS including neuronal maturation and axonal and myelin formation. In Mus musculus (Mouse), this protein is Beta-1,4-galactosyltransferase 6.